Reading from the N-terminus, the 238-residue chain is tRNA1(Val) (adenine(37)-N6)-methyltransferase (238 aa).

This sequence belongs to the methyltransferase superfamily. tRNA (adenine-N(6)-)-methyltransferase family.

Its subcellular location is the cytoplasm. It carries out the reaction adenosine(37) in tRNA1(Val) + S-adenosyl-L-methionine = N(6)-methyladenosine(37) in tRNA1(Val) + S-adenosyl-L-homocysteine + H(+). Its function is as follows. Specifically methylates the adenine in position 37 of tRNA(1)(Val) (anticodon cmo5UAC). This Shewanella baltica (strain OS223) protein is tRNA1(Val) (adenine(37)-N6)-methyltransferase.